The chain runs to 408 residues: 4-hydroxy-3-methylbut-2-en-1-yl diphosphate synthase (ferredoxin) (408 aa).

Residues 1–21 (MQTLPTPTTSSNTANQSTFDT) show a composition bias toward polar residues. The interval 1–26 (MQTLPTPTTSSNTANQSTFDTTIKRR) is disordered. Residues cysteine 317, cysteine 320, cysteine 351, and glutamate 358 each contribute to the [4Fe-4S] cluster site.

Belongs to the IspG family. Requires [4Fe-4S] cluster as cofactor.

It catalyses the reaction (2E)-4-hydroxy-3-methylbut-2-enyl diphosphate + 2 oxidized [2Fe-2S]-[ferredoxin] + H2O = 2-C-methyl-D-erythritol 2,4-cyclic diphosphate + 2 reduced [2Fe-2S]-[ferredoxin] + H(+). The protein operates within isoprenoid biosynthesis; isopentenyl diphosphate biosynthesis via DXP pathway; isopentenyl diphosphate from 1-deoxy-D-xylulose 5-phosphate: step 5/6. Functionally, converts 2C-methyl-D-erythritol 2,4-cyclodiphosphate (ME-2,4cPP) into 1-hydroxy-2-methyl-2-(E)-butenyl 4-diphosphate. The chain is 4-hydroxy-3-methylbut-2-en-1-yl diphosphate synthase (ferredoxin) from Trichormus variabilis (strain ATCC 29413 / PCC 7937) (Anabaena variabilis).